The chain runs to 344 residues: Anthranilate phosphoribosyltransferase (344 aa).

Residues G86, 89–90 (GD), T94, 96–99 (NIST), 114–122 (KHGNKSASG), and S126 each bind 5-phospho-alpha-D-ribose 1-diphosphate. G86 contacts anthranilate. Residue S98 participates in Mg(2+) binding. An anthranilate-binding site is contributed by N117. Residue R172 participates in anthranilate binding. 2 residues coordinate Mg(2+): D231 and E232.

It belongs to the anthranilate phosphoribosyltransferase family. In terms of assembly, homodimer. Mg(2+) serves as cofactor.

It catalyses the reaction N-(5-phospho-beta-D-ribosyl)anthranilate + diphosphate = 5-phospho-alpha-D-ribose 1-diphosphate + anthranilate. The protein operates within amino-acid biosynthesis; L-tryptophan biosynthesis; L-tryptophan from chorismate: step 2/5. Catalyzes the transfer of the phosphoribosyl group of 5-phosphorylribose-1-pyrophosphate (PRPP) to anthranilate to yield N-(5'-phosphoribosyl)-anthranilate (PRA). This Prochlorococcus marinus (strain MIT 9215) protein is Anthranilate phosphoribosyltransferase.